The primary structure comprises 230 residues: uncharacterized protein (230 aa).

A run of 7 helical transmembrane segments spans residues 34 to 54 (FFAG…MNFQ), 56 to 76 (VVQY…GLMF), 87 to 107 (MLFA…GMVI), 111 to 131 (GLGA…LMSV), 146 to 166 (MLFI…FLGS), 167 to 187 (PMFQ…YIAY), and 205 to 225 (VSLY…IGIF).

This sequence belongs to the BI1 family.

The protein localises to the cell membrane. This is an uncharacterized protein from Helicobacter pylori (strain ATCC 700392 / 26695) (Campylobacter pylori).